The chain runs to 536 residues: CTP synthase (536 aa).

The interval 1 to 268 (MSTKYVFVTG…DNLVCEKLHL (268 aa)) is amidoligase domain. A CTP-binding site is contributed by S14. S14 lines the UTP pocket. Position 15–20 (15–20 (ALGKGI)) interacts with ATP. Y55 serves as a coordination point for L-glutamine. D72 provides a ligand contact to ATP. Residues D72 and E142 each coordinate Mg(2+). Residues 149-151 (DIE), 189-194 (KTKPTQ), and K225 each bind CTP. UTP contacts are provided by residues 189-194 (KTKPTQ) and K225. One can recognise a Glutamine amidotransferase type-1 domain in the interval 293-535 (KIALVGKYVE…IKAALEENKS (243 aa)). G355 provides a ligand contact to L-glutamine. Catalysis depends on C382, which acts as the Nucleophile; for glutamine hydrolysis. Residues 383–386 (LGMQ), E406, and R463 contribute to the L-glutamine site. Catalysis depends on residues H508 and E510.

This sequence belongs to the CTP synthase family. Homotetramer.

The enzyme catalyses UTP + L-glutamine + ATP + H2O = CTP + L-glutamate + ADP + phosphate + 2 H(+). It carries out the reaction L-glutamine + H2O = L-glutamate + NH4(+). The catalysed reaction is UTP + NH4(+) + ATP = CTP + ADP + phosphate + 2 H(+). The protein operates within pyrimidine metabolism; CTP biosynthesis via de novo pathway; CTP from UDP: step 2/2. Its activity is regulated as follows. Allosterically activated by GTP, when glutamine is the substrate; GTP has no effect on the reaction when ammonia is the substrate. The allosteric effector GTP functions by stabilizing the protein conformation that binds the tetrahedral intermediate(s) formed during glutamine hydrolysis. Inhibited by the product CTP, via allosteric rather than competitive inhibition. Functionally, catalyzes the ATP-dependent amination of UTP to CTP with either L-glutamine or ammonia as the source of nitrogen. Regulates intracellular CTP levels through interactions with the four ribonucleotide triphosphates. The polypeptide is CTP synthase (Clostridium beijerinckii (strain ATCC 51743 / NCIMB 8052) (Clostridium acetobutylicum)).